The primary structure comprises 129 residues: Small ribosomal subunit protein uS11 (129 aa).

Belongs to the universal ribosomal protein uS11 family. In terms of assembly, part of the 30S ribosomal subunit. Interacts with proteins S7 and S18. Binds to IF-3.

In terms of biological role, located on the platform of the 30S subunit, it bridges several disparate RNA helices of the 16S rRNA. Forms part of the Shine-Dalgarno cleft in the 70S ribosome. This chain is Small ribosomal subunit protein uS11, found in Symbiobacterium thermophilum (strain DSM 24528 / JCM 14929 / IAM 14863 / T).